A 355-amino-acid chain; its full sequence is MRRLLTLTTLLAGVPLAAPVCAEQVFSFQRAAGQLPKTVVPVSYGINISTDIDNLKLTGQETIQVDVRTPTEDVTLNQAGLHLAGAVLDNGVKATITQDDAAETATLHFPAKVSKGAHTLVITYSGPILKTPNGIYVDDYTAPSGETKRMLVTQFEVADARRMFPGWDEPAFKATFQLNVTLPKEAVAVSNMPVTQSTPEGTSQKRVSFATTPRMSTYLLALVAGDMKSVQGQADGTPLAVYAPSGLEEQGEYALHASEKILPYYNNYFGVKYPLPQMDMVAIPGNYQAGAMENWGLLTYIDNVLLFDPPNSTPRTRELIYEVVAHEMAHQWSGDLVTMGWWDNIWLNEGFASWM.

Residues Glu156 and 290–294 (GAMEN) each bind substrate. His326 is a binding site for Zn(2+). The active-site Proton acceptor is the Glu327. His330 and Glu349 together coordinate Zn(2+). Glu349 contributes to the substrate binding site.

Belongs to the peptidase M1 family. It depends on Zn(2+) as a cofactor.

Its subcellular location is the cytoplasm. The catalysed reaction is Release of an N-terminal amino acid, Xaa-|-Yaa- from a peptide, amide or arylamide. Xaa is preferably Ala, but may be most amino acids including Pro (slow action). When a terminal hydrophobic residue is followed by a prolyl residue, the two may be released as an intact Xaa-Pro dipeptide.. Functionally, aminopeptidase N is involved in the degradation of intracellular peptides generated by protein breakdown during normal growth as well as in response to nutrient starvation. This is Aminopeptidase N (pepN) from Acetobacter pasteurianus (Acetobacter turbidans).